The following is a 460-amino-acid chain: Bifunctional protein GlmU (460 aa).

Residues 1-235 (MALSAAIVLA…PLTVEGVNDR (235 aa)) form a pyrophosphorylase region. UDP-N-acetyl-alpha-D-glucosamine is bound by residues 9–12 (LAAG), lysine 23, glutamine 76, and 81–82 (GT). Aspartate 109 contacts Mg(2+). Positions 146, 161, 176, and 233 each coordinate UDP-N-acetyl-alpha-D-glucosamine. Asparagine 233 is a binding site for Mg(2+). Positions 236–256 (VQLAALSKTYNRRVCERWMRD) are linker. Residues 257-460 (GVTILDPETT…VEGWKPAWER (204 aa)) form an N-acetyltransferase region. 2 residues coordinate UDP-N-acetyl-alpha-D-glucosamine: arginine 338 and lysine 356. Histidine 368 functions as the Proton acceptor in the catalytic mechanism. Residues tyrosine 371 and asparagine 382 each coordinate UDP-N-acetyl-alpha-D-glucosamine. Acetyl-CoA is bound by residues 391-392 (NY) and alanine 428.

This sequence in the N-terminal section; belongs to the N-acetylglucosamine-1-phosphate uridyltransferase family. In the C-terminal section; belongs to the transferase hexapeptide repeat family. As to quaternary structure, homotrimer. Mg(2+) serves as cofactor.

It is found in the cytoplasm. It catalyses the reaction alpha-D-glucosamine 1-phosphate + acetyl-CoA = N-acetyl-alpha-D-glucosamine 1-phosphate + CoA + H(+). The catalysed reaction is N-acetyl-alpha-D-glucosamine 1-phosphate + UTP + H(+) = UDP-N-acetyl-alpha-D-glucosamine + diphosphate. Its pathway is nucleotide-sugar biosynthesis; UDP-N-acetyl-alpha-D-glucosamine biosynthesis; N-acetyl-alpha-D-glucosamine 1-phosphate from alpha-D-glucosamine 6-phosphate (route II): step 2/2. It participates in nucleotide-sugar biosynthesis; UDP-N-acetyl-alpha-D-glucosamine biosynthesis; UDP-N-acetyl-alpha-D-glucosamine from N-acetyl-alpha-D-glucosamine 1-phosphate: step 1/1. It functions in the pathway bacterial outer membrane biogenesis; LPS lipid A biosynthesis. Catalyzes the last two sequential reactions in the de novo biosynthetic pathway for UDP-N-acetylglucosamine (UDP-GlcNAc). The C-terminal domain catalyzes the transfer of acetyl group from acetyl coenzyme A to glucosamine-1-phosphate (GlcN-1-P) to produce N-acetylglucosamine-1-phosphate (GlcNAc-1-P), which is converted into UDP-GlcNAc by the transfer of uridine 5-monophosphate (from uridine 5-triphosphate), a reaction catalyzed by the N-terminal domain. The sequence is that of Bifunctional protein GlmU from Bifidobacterium longum (strain DJO10A).